The following is a 346-amino-acid chain: Dihydroorotate dehydrogenase (quinone) (346 aa).

FMN contacts are provided by residues 61–65 (AGLDK) and Thr-85. Lys-65 is a binding site for substrate. 110 to 114 (NRMGF) serves as a coordination point for substrate. Positions 138 and 171 each coordinate FMN. A substrate-binding site is contributed by Asn-171. Ser-174 serves as the catalytic Nucleophile. Asn-176 lines the substrate pocket. Lys-216 and Thr-244 together coordinate FMN. Position 245–246 (245–246 (NT)) interacts with substrate. Residues Gly-267, Gly-296, and 317-318 (YS) each bind FMN.

It belongs to the dihydroorotate dehydrogenase family. Type 2 subfamily. As to quaternary structure, monomer. Requires FMN as cofactor.

It is found in the cell membrane. It carries out the reaction (S)-dihydroorotate + a quinone = orotate + a quinol. It functions in the pathway pyrimidine metabolism; UMP biosynthesis via de novo pathway; orotate from (S)-dihydroorotate (quinone route): step 1/1. Functionally, catalyzes the conversion of dihydroorotate to orotate with quinone as electron acceptor. The polypeptide is Dihydroorotate dehydrogenase (quinone) (Marinomonas sp. (strain MWYL1)).